We begin with the raw amino-acid sequence, 288 residues long: MLREYKLVVVGGGGVGKSALTIQLIQSHFVDEYDPTIEDSYRKQCTIDDQQVLLDVLDTAGQEEYSAMREQYMRTGEGFLLVYSINSLNSFQELNSFYDQILRVKDSDNVPVLVVGNKCDLEMERQVSYEDGLALANSFNCPFLETSAKQRINVEEAFYGLVRNINQYNAKIAEAEKQQQQQQQQQNANQQGQDQYGQQKDNQQSQFNNQINNNNNTSAVNGGVSSDGIIDQNGNGGVSSGQANLPNQSQSQRQQQQQQQEPQQQSENQFSGQKQSSSKSKNGCCVIV.

Residue 11 to 18 participates in GTP binding; sequence GGGGVGKS. An Effector region motif is present at residues 33-41; sequence YDPTIEDSY. GTP-binding positions include 58 to 62 and 117 to 120; these read DTAGQ and NKCD. The segment at 176–288 is disordered; sequence EKQQQQQQQQ…KSKNGCCVIV (113 aa). Low complexity-rich tracts occupy residues 178–216 and 246–281; these read QQQQQQQQQNANQQGQDQYGQQKDNQQSQFNNQINNNNN and PNQSQSQRQQQQQQQEPQQQSENQFSGQKQSSSKSK. The S-palmitoyl cysteine moiety is linked to residue Cys-284. Cys-285 carries the post-translational modification Cysteine methyl ester. Cys-285 carries the S-farnesyl cysteine lipid modification. Residues 286–288 constitute a propeptide, removed in mature form; the sequence is VIV.

It belongs to the small GTPase superfamily. Ras family.

The protein localises to the cell membrane. The enzyme catalyses GTP + H2O = GDP + phosphate + H(+). Alternates between an inactive form bound to GDP and an active form bound to GTP. Activated by a guanine nucleotide-exchange factor (GEF) and inactivated by a GTPase-activating protein (GAP). Required for the regulation of both a MAP kinase signaling pathway and a cAMP signaling pathway. The activation of these pathways contributes to the pathogenicity of the cells through the induction of the morphological transition from the yeast to the polarized filamentous form. This is Ras-like protein 1 (RAS1) from Candida albicans (strain WO-1) (Yeast).